We begin with the raw amino-acid sequence, 2282 residues long: Serine/threonine-protein kinase TEL1 (2282 aa).

In terms of domain architecture, FAT spans 1325–1844 (EIVNSALTLH…LYQISSLMRT (520 aa)). The 312-residue stretch at 1939-2250 (VLAQVIKAGG…LSGVKGKLAV (312 aa)) folds into the PI3K/PI4K catalytic domain. A G-loop region spans residues 1945-1951 (KAGGISH). Residues 2115–2123 (GIGDRHCNN) are catalytic loop. The tract at residues 2135–2159 (HIDLGISFDQGKNLTVPEKVPFRLT) is activation loop. The 33-residue stretch at 2250 to 2282 (VRLSTEAVVRELIGEAVSVENLAVIFHGWTPFY) folds into the FATC domain.

This sequence belongs to the PI3/PI4-kinase family. ATM subfamily. Associates with DNA double-strand breaks.

The protein resides in the nucleus. It is found in the chromosome. It localises to the telomere. The catalysed reaction is L-seryl-[protein] + ATP = O-phospho-L-seryl-[protein] + ADP + H(+). It carries out the reaction L-threonyl-[protein] + ATP = O-phospho-L-threonyl-[protein] + ADP + H(+). Serine/threonine protein kinase which activates checkpoint signaling upon genotoxic stresses such as ionizing radiation (IR), ultraviolet light (UV), or DNA replication stalling, thereby acting as a DNA damage sensor. Recognizes the substrate consensus sequence [ST]-Q. Phosphorylates histone H2A to form H2AS128ph (gamma-H2A) at sites of DNA damage, involved in the regulation of DNA damage response mechanism. Required for the control of telomere length and genome stability. In Yarrowia lipolytica (strain CLIB 122 / E 150) (Yeast), this protein is Serine/threonine-protein kinase TEL1 (TEL1).